Consider the following 157-residue polypeptide: Protein UXT (157 aa).

The protein belongs to the UXT family. As to quaternary structure, homohexamer. Component of the PAQosome complex which is responsible for the biogenesis of several protein complexes and which consists of R2TP complex members RUVBL1, RUVBL2, RPAP3 and PIH1D1, URI complex members PFDN2, PFDN6, PDRG1, UXT and URI1 as well as ASDURF, POLR2E and DNAAF10/WDR92. Interacts with LRPPRC. Interacts with androgen receptor AR (via N-terminus). Interacts with estrogen receptor ESR1; the interaction relocalizes ESR1 from the nucleus to the cytoplasm. In the nucleus, interacts specifically with RELA (via RHD domain) and forms a dynamic complex with NF-kappa-B and is recruited to the NF-kappa-B enhanceosome upon stimulation. Interacts with MECOM. Interacts with URI1. In terms of assembly, part of complex I composed of TNF-alpha receptor TNFRSF1A, TRADD, TRAF2 and RIPK1 formed in response to TNF-alpha stimulation. Within the complex, interacts (via TPQE motif) with TRAF2; the interaction prevents the recruitment of FADD and CASP8/caspase 8 to complex I. In terms of processing, ubiquitinated by E3 ubiquitin-protein ligase complex containing FBXO7; leading to proteasomal degradation. In terms of tissue distribution, ubiquitous. Expressed in prostate epithelial cells. Expressed in mammary epithelial cells. Highest levels in the heart, skeletal muscle, pancreas, kidney, liver, adrenal gland, peripheral blood leukocytes, lymph node, prostate, and thyroid and the lowest levels in bladder and uterus. Overexpressed in a number of tumor tissues.

It is found in the cytoplasm. Its subcellular location is the nucleus. The protein localises to the cytoskeleton. The protein resides in the microtubule organizing center. It localises to the centrosome. It is found in the spindle pole. Its function is as follows. Involved in gene transcription regulation. Acts in concert with the corepressor URI1 to regulate androgen receptor AR-mediated transcription. Together with URI1, associates with chromatin to the NKX3-1 promoter region. Negatively regulates the transcriptional activity of the estrogen receptor ESR1 by inducing its translocation into the cytoplasm. May act as nuclear chaperone that facilitates the formation of the NF-kappa-B enhanceosome and thus positively regulates NF-kappa-B transcription activity. Potential component of mitochondrial-associated LRPPRC, a multidomain organizer that potentially integrates mitochondria and the microtubular cytoskeleton with chromosome remodeling. Increasing concentrations of UXT contributes to progressive aggregation of mitochondria and cell death potentially through its association with LRPPRC. Suppresses cell transformation and it might mediate this function by interaction and inhibition of the biological activity of cell proliferation and survival stimulatory factors like MECOM. In terms of biological role, plays a role in protecting cells against TNF-alpha-induced apoptosis by preventing the recruitment of FADD and caspase 8 to the apoptotic complex I, composed of TRADD, TRAF2 and RIPK1/RIP. This Homo sapiens (Human) protein is Protein UXT (UXT).